We begin with the raw amino-acid sequence, 735 residues long: Ethylene receptor 1 (735 aa).

Helical transmembrane passes span 23–43 (ISDF…IYFV), 54–74 (VLVQ…INLW), and 92–112 (VLTA…IPDL). Cu cation-binding residues include Cys-65 and His-69. The GAF domain occupies 158-307 (DRHTILKTTL…VVADQVAVAL (150 aa)). The Histidine kinase domain occupies 350–586 (VMNHEMRTPM…IFDVKLAISN (237 aa)). His-353 is modified (phosphohistidine; by autocatalysis). The Response regulatory domain maps to 609–726 (KVLVMDENGV…NMRNVLSDRL (118 aa)). Asp-657 bears the 4-aspartylphosphate mark. A Glycyl lysine isopeptide (Lys-Gly) (interchain with G-Cter in ubiquitin) cross-link involves residue Lys-711.

It belongs to the ethylene receptor family. As to quaternary structure, homodimer; disulfide-linked. Cu cation serves as cofactor. In terms of processing, activation probably requires a transfer of a phosphate group between a His in the transmitter domain and an Asp of the receiver domain.

It is found in the endoplasmic reticulum membrane. The enzyme catalyses ATP + protein L-histidine = ADP + protein N-phospho-L-histidine.. May act early in the ethylene signal transduction pathway, possibly as an ethylene receptor, or as a regulator of the pathway. In Brassica oleracea (Wild cabbage), this protein is Ethylene receptor 1 (ETR1).